Here is a 174-residue protein sequence, read N- to C-terminus: MARRHKKSKSDVVQINPDATINYVMGILTGANAYIDGLLSGANMYNAWVMQEMSLEGKPIGTYKPDSLRDYIDNLKNTNPRLYSLMKTDPKVFIDELQKTGQLDAFLGATNYARLAKTDKYMIEAGRKYRDTVPSLVKSKSPDTGLAFLQQYAPYGGMTMARLGNILKTGVKVE.

This is an uncharacterized protein from Acidianus convivator (ABV).